The following is a 64-amino-acid chain: DGYIRGSNGCKISCLWGNEGCNKECKGFGAYYGYCWTWGLACWCEGLPDDKTWKSESNTCGRKK.

One can recognise an LCN-type CS-alpha/beta domain in the interval 1 to 61; that stretch reads DGYIRGSNGC…TWKSESNTCG (61 aa). 4 disulfide bridges follow: C10–C60, C14–C35, C21–C42, and C25–C44. C60 carries the cysteine amide modification.

It belongs to the long (4 C-C) scorpion toxin superfamily. Sodium channel inhibitor family. Beta subfamily. In terms of tissue distribution, expressed by the venom gland.

Its subcellular location is the secreted. Depressant insect beta-toxins cause a transient contraction paralysis followed by a slow flaccid paralysis. They bind voltage-independently at site-4 of sodium channels (Nav) and shift the voltage of activation toward more negative potentials thereby affecting sodium channel activation and promoting spontaneous and repetitive firing. This toxin is active only on insects. The sequence is that of Beta-insect depressant toxin BmKIT4 from Olivierus martensii (Manchurian scorpion).